Here is an 804-residue protein sequence, read N- to C-terminus: ATP-dependent RNA helicase dbp4 (804 aa).

The interval 1–24 (MAPANAPRNGKYAKSSQRTLKRKR) is disordered. The Q motif signature appears at 46–74 (KAFTDLPLSEPTLSGLSASHYKTLTDIQS). Residues 77 to 251 (VSHALKGRDI…RLSLQDPEYV (175 aa)) form the Helicase ATP-binding domain. ATP is bound at residue 90 to 97 (AKTGSGKT). The short motif at 199–202 (DEAD) is the DEAD box element. A Helicase C-terminal domain is found at 277–436 (KLDILWSFIR…SIKNQLQNMC (160 aa)). Disordered stretches follow at residues 493-541 (GDDT…DRMF), 589-615 (DKQLEVGGSSDESGSDSEAETGKKDVK), and 695-804 (LADV…GLLG). Over residues 521–541 (DEKKSKKKDAPQVRTKYDRMF) the composition is skewed to basic and acidic residues. A compositionally biased stretch (basic and acidic residues) spans 695 to 705 (LADVEDKELVK). Residues 706–715 (QKRREKKEKR) are compositionally biased toward basic residues.

It belongs to the DEAD box helicase family. DDX10/DBP4 subfamily. Interacts with the U3 and U14 snoRNAs. Associates with pre-ribosomal complexes.

Its subcellular location is the nucleus. The protein resides in the nucleolus. The enzyme catalyses ATP + H2O = ADP + phosphate + H(+). Its function is as follows. ATP-dependent RNA helicase required for ribosome biogenesis. Involved in the release of U14 snoRNA in pre-ribosomal complexes. Required for pre-rRNA cleavage at site A2. This Aspergillus terreus (strain NIH 2624 / FGSC A1156) protein is ATP-dependent RNA helicase dbp4 (dbp4).